Consider the following 178-residue polypeptide: Alkyl hydroperoxide reductase AhpD (178 aa).

Cys131 (proton donor) is an active-site residue. Cys131 and Cys134 are oxidised to a cystine. The Cysteine sulfenic acid (-SOH) intermediate role is filled by Cys134.

It belongs to the AhpD family. In terms of assembly, homotrimer.

It carries out the reaction N(6)-[(R)-dihydrolipoyl]-L-lysyl-[lipoyl-carrier protein] + a hydroperoxide = N(6)-[(R)-lipoyl]-L-lysyl-[lipoyl-carrier protein] + an alcohol + H2O. Functionally, antioxidant protein with alkyl hydroperoxidase activity. Required for the reduction of the AhpC active site cysteine residues and for the regeneration of the AhpC enzyme activity. This Streptomyces coelicolor (strain ATCC BAA-471 / A3(2) / M145) protein is Alkyl hydroperoxide reductase AhpD.